Here is a 166-residue protein sequence, read N- to C-terminus: Ribosome-binding factor A (166 aa).

A disordered region spans residues 119-166; that stretch reads VQAQAKSGVYAGDEDPYVKPRVIGEDEDEDDEDGDDIDRSAPGYEPAH. Residues 143–154 are compositionally biased toward acidic residues; the sequence is EDEDEDDEDGDD.

This sequence belongs to the RbfA family. As to quaternary structure, monomer. Binds 30S ribosomal subunits, but not 50S ribosomal subunits or 70S ribosomes.

It localises to the cytoplasm. Its function is as follows. One of several proteins that assist in the late maturation steps of the functional core of the 30S ribosomal subunit. Associates with free 30S ribosomal subunits (but not with 30S subunits that are part of 70S ribosomes or polysomes). Required for efficient processing of 16S rRNA. May interact with the 5'-terminal helix region of 16S rRNA. This is Ribosome-binding factor A from Clavibacter michiganensis subsp. michiganensis (strain NCPPB 382).